Reading from the N-terminus, the 491-residue chain is Inositol-pentakisphosphate 2-kinase (491 aa).

The short motif at 136–140 (EIKPK) is the EXKPK motif element. The residue at position 282 (S282) is a Phosphoserine.

It belongs to the IPK1 type 2 family. As to expression, ubiquitously expressed, with high expression in heart, brain, testis and placenta.

The protein resides in the cytoplasm. It is found in the nucleus. The enzyme catalyses 1D-myo-inositol 1,3,4,5,6-pentakisphosphate + ATP = 1D-myo-inositol hexakisphosphate + ADP + H(+). Its function is as follows. Phosphorylates Ins(1,3,4,5,6)P5 at position 2 to form Ins(1,2,3,4,5,6)P6 (InsP6 or phytate). InsP6 is involved in many processes such as mRNA export, non-homologous end-joining, endocytosis, ion channel regulation. It also protects cells from TNF-alpha-induced apoptosis. In Homo sapiens (Human), this protein is Inositol-pentakisphosphate 2-kinase (IPPK).